A 302-amino-acid polypeptide reads, in one-letter code: D-alanine--D-alanine ligase (302 aa).

Positions 100–295 constitute an ATP-grasp domain; the sequence is KTVFDHHGIL…FNELIAKLIE (196 aa). 126–180 provides a ligand contact to ATP; it reads QDLEPPVFIKPNSGGSSLGMTFARTAEELEKGIETVFSLGDSALVEEYTKGIEVT. Residues Asp250, Glu262, and Asn264 each coordinate Mg(2+).

It belongs to the D-alanine--D-alanine ligase family. Requires Mg(2+) as cofactor. Mn(2+) serves as cofactor.

It is found in the cytoplasm. It catalyses the reaction 2 D-alanine + ATP = D-alanyl-D-alanine + ADP + phosphate + H(+). It functions in the pathway cell wall biogenesis; peptidoglycan biosynthesis. In terms of biological role, cell wall formation. The protein is D-alanine--D-alanine ligase of Maridesulfovibrio salexigens (strain ATCC 14822 / DSM 2638 / NCIMB 8403 / VKM B-1763) (Desulfovibrio salexigens).